The sequence spans 203 residues: Thymidylate kinase (203 aa).

Gly-10–Ser-17 contributes to the ATP binding site.

The protein belongs to the thymidylate kinase family.

It carries out the reaction dTMP + ATP = dTDP + ADP. Its function is as follows. Phosphorylation of dTMP to form dTDP in both de novo and salvage pathways of dTTP synthesis. This Methylobacillus flagellatus (strain ATCC 51484 / DSM 6875 / VKM B-1610 / KT) protein is Thymidylate kinase.